Reading from the N-terminus, the 337-residue chain is ADP-ribosylation factor GTPase-activating protein AGD12 (337 aa).

In terms of domain architecture, Arf-GAP spans 15–137 (KRRIRDLLTQ…EFLKPSLRIT (123 aa)). A C4-type zinc finger spans residues 30–53 (CADCGAPDPKWASANIGVFICLKC). Positions 164 to 281 (TNSSSQQPQL…AMAFGDPEMF (118 aa)) constitute a C2 domain. Ca(2+)-binding residues include aspartate 250, serine 253, and aspartate 256.

Requires Ca(2+) as cofactor. Expressed in roots, leaves, flowers and siliques. Low levels of expression in seeds and stems.

Its subcellular location is the golgi apparatus. The protein localises to the cell membrane. In terms of biological role, GTPase-activating protein (GAP) for ADP ribosylation factor (ARF). Binds phosphatidylinositol 3-monophosohate (PI-3-P) and anionic phospholipids. This chain is ADP-ribosylation factor GTPase-activating protein AGD12 (AGD12), found in Arabidopsis thaliana (Mouse-ear cress).